We begin with the raw amino-acid sequence, 223 residues long: Expansin-B6 (223 aa).

The Expansin-like EG45 domain maps to 16–124 (GGACGFAVAN…RRVECLYRRT (109 aa)). 3 disulfides stabilise this stretch: Cys19/Cys46, Cys49/Cys119, and Cys54/Cys60. An Expansin-like CBD domain is found at 137–218 (YYISFVVEYE…NWKPNETYRS (82 aa)). A glycan (N-linked (GlcNAc...) asparagine) is linked at Asn213.

It belongs to the expansin family. Expansin B subfamily.

The protein localises to the secreted. It is found in the cell wall. The protein resides in the membrane. In terms of biological role, may cause loosening and extension of plant cell walls by disrupting non-covalent bonding between cellulose microfibrils and matrix glucans. This Arabidopsis thaliana (Mouse-ear cress) protein is Expansin-B6.